Here is a 394-residue protein sequence, read N- to C-terminus: N-acetylgalactosamine-6-phosphate deacetylase (394 aa).

Glu-137 is a binding site for Zn(2+). Position 148–149 (148–149 (CH)) interacts with substrate. Zn(2+) contacts are provided by His-201 and His-222. Residues 225–226 (NG), Arg-233, and 254–257 (DGQH) contribute to the substrate site. Asp-280 serves as the catalytic Proton donor/acceptor. 313 to 315 (LAG) contacts substrate.

The protein belongs to the metallo-dependent hydrolases superfamily. NagA family.

The protein localises to the cytoplasm. The enzyme catalyses N-acetyl-D-galactosamine 6-phosphate + H2O = D-galactosamine 6-phosphate + acetate. It catalyses the reaction N-acetyl-D-glucosamine 6-phosphate + H2O = D-glucosamine 6-phosphate + acetate. Involved in the pathway of N-acetyl-D-galactosamine degradation. Catalyzes the conversion of N-acetyl-D-galactosamine 6-phosphate to D-galactosamine 6-phosphate and acetate. It can also catalyze the conversion of N-acetyl-D-glucosamine 6-phosphate. The chain is N-acetylgalactosamine-6-phosphate deacetylase from Shewanella sp. (strain ANA-3).